The sequence spans 171 residues: Large ribosomal subunit protein uL10 (171 aa).

This sequence belongs to the universal ribosomal protein uL10 family. As to quaternary structure, part of the ribosomal stalk of the 50S ribosomal subunit. The N-terminus interacts with L11 and the large rRNA to form the base of the stalk. The C-terminus forms an elongated spine to which L12 dimers bind in a sequential fashion forming a multimeric L10(L12)X complex.

Forms part of the ribosomal stalk, playing a central role in the interaction of the ribosome with GTP-bound translation factors. This is Large ribosomal subunit protein uL10 from Hyphomonas neptunium (strain ATCC 15444).